The chain runs to 60 residues: Large ribosomal subunit protein uL30 (60 aa).

Belongs to the universal ribosomal protein uL30 family. As to quaternary structure, part of the 50S ribosomal subunit.

This is Large ribosomal subunit protein uL30 from Nocardioides sp. (strain ATCC BAA-499 / JS614).